Consider the following 429-residue polypeptide: Histidine--tRNA ligase (429 aa).

The protein belongs to the class-II aminoacyl-tRNA synthetase family. As to quaternary structure, homodimer.

It is found in the cytoplasm. It carries out the reaction tRNA(His) + L-histidine + ATP = L-histidyl-tRNA(His) + AMP + diphosphate + H(+). This Stutzerimonas stutzeri (strain A1501) (Pseudomonas stutzeri) protein is Histidine--tRNA ligase.